Here is a 115-residue protein sequence, read N- to C-terminus: Con-Ins T1A (115 aa).

A signal peptide spans 1–24; it reads MTTSFYFLLMALGLLLYVCQSSFG. The propeptide occupies 25–29; sequence NQHTR. Position 34 is a 4-hydroxyproline; partial (Pro-34). 3 disulfide bridges follow: Cys-38–Cys-101, Cys-50–Cys-114, and Cys-100–Cys-105. Residue Glu-41 is modified to 4-carboxyglutamate. Residues 53 to 94 constitute a propeptide, c peptide; it reads KRNDAGKKRGRASPLWQRGGSLSMLKARAKRNEAFHLQRAHR. Residue Glu-98 is modified to 4-carboxyglutamate. Pro-104 is modified (4-hydroxyproline; partial). A 4-carboxyglutamate; partial modification is found at Glu-109. Position 114 is a cysteine amide (Cys-114).

Belongs to the insulin family. As to quaternary structure, heterodimer of A and B chains; disulfide-linked. As to expression, expressed by the venom gland.

It localises to the secreted. Functionally, this venom insulin, from a fish-hunting cone snail, facilitates prey capture by rapidly inducing hypoglycemic shock. It is one of the smallest known insulin found in nature and lacks the C-terminal segment of the B chain that, in human insulin, mediates engagement of the insulin receptor (INSR) and assembly of the hormone's hexameric storage form. Despite lacking this segment, it both binds and activates human insulin receptor (long isoform (HIR-B)) with a high potency (EC(50)=12.0 nM). In vivo, intraperitoneal injection of this peptide into zebrafish lowers blood glucose with a lower potency than human insulin. In addition, when applied to water, this peptide reduces overall locomotor activity of zebrafish larvae, observed as a significant decrease in the percentage of time spent swimming and movement frequency. When tested on a mouse model of diabetes, this insulin also lowers blood glucose with a 10-fold lower potency than human insulin. This chain is Con-Ins T1A, found in Conus tulipa (Fish-hunting cone snail).